Consider the following 63-residue polypeptide: uncharacterized protein (63 aa).

Transmembrane regions (helical) follow at residues 3–23 and 42–62; these read VFLI…VYYI and ALVC…TKLL.

The protein localises to the cell membrane. This is an uncharacterized protein from Bacillus subtilis (strain 168).